Consider the following 155-residue polypeptide: MTILSLSRFMLAGVLLASFNASAIPGFWQQGYGQGNTEYSVTEASGKTFTINCTGNPDQNGFYQHSVFLTLADDKMVSSHDDDTTITVVMDHQQYIIPSSLGWRNGDNAWFDFISNISEAGQFDVYVNDHKAGTFTADRKNAEKVLSTLGDCSND.

The signal sequence occupies residues 1–23 (MTILSLSRFMLAGVLLASFNASA).

This sequence to E.coli YfjT.

This is an uncharacterized protein from Escherichia coli (strain K12).